The chain runs to 935 residues: Phosphoenolpyruvate carboxylase (935 aa).

Catalysis depends on residues H161 and K593.

The protein belongs to the PEPCase type 1 family. Mg(2+) is required as a cofactor.

It carries out the reaction oxaloacetate + phosphate = phosphoenolpyruvate + hydrogencarbonate. Forms oxaloacetate, a four-carbon dicarboxylic acid source for the tricarboxylic acid cycle. The chain is Phosphoenolpyruvate carboxylase from Mycolicibacterium paratuberculosis (strain ATCC BAA-968 / K-10) (Mycobacterium paratuberculosis).